Reading from the N-terminus, the 80-residue chain is Large ribosomal subunit protein uL24 (80 aa).

Belongs to the universal ribosomal protein uL24 family. In terms of assembly, part of the 50S ribosomal subunit.

Functionally, one of two assembly initiator proteins, it binds directly to the 5'-end of the 23S rRNA, where it nucleates assembly of the 50S subunit. One of the proteins that surrounds the polypeptide exit tunnel on the outside of the subunit. This is Large ribosomal subunit protein uL24 from Prosthecochloris aestuarii (strain DSM 271 / SK 413).